The sequence spans 168 residues: Small ribosomal subunit protein uS9 (168 aa).

Over residues 1-15 (MAQNEETTEAVEAEE) the composition is skewed to acidic residues. The tract at residues 1-34 (MAQNEETTEAVEAEETLTSYTSESGAAEAAAPKK) is disordered.

Belongs to the universal ribosomal protein uS9 family.

This chain is Small ribosomal subunit protein uS9, found in Arthrobacter sp. (strain FB24).